The primary structure comprises 517 residues: MKNFNALSRLSILSKQLSFNNTNSSIARGDIGLIGLAVMGQNLILNMADHGYTVVAYNRTTAKVDRFLENEAKGKSILGAHSIKELVDQLKRPRRIMLLVKAGAPVDEFINQLLPYLEEGDIIIDGGNSHFPDSNRRYEELAKKGILFVGSGVSGGEEGARTGPSLMPGGNEKAWPHIKEIFQDVAAKSDGEPCCDWVGDAGAGHYVKMVHNGIEYGDMQLICEAYDLMKRVGKFEDKEIGDVFATWNKGVLDSFLIEITRDILYYNDPTDGKPLVEKILDTAGQKGTGKWTAVNALDLGIPVTLIGEAVFSRCLSAMKAERVEASKALKGPQVTGESPITDKKQFIDDLEQALYASKIISYTQGFMLMNQAAKDYGWKLNNAGIALMWRGGCIIRSVFLAEITAAYRKKPDLENLLLYPFFNDAITKAQSGWRASVGKAIQYGIPTPAFSTALAFYDGLRSERLPANLLQAQRDYFGAHTFKVLPGQENELLKKDEWIHINWTGRGGDVSSTTYDA.

NADP(+) contacts are provided by residues 35–40 (GLAVMG), 58–60 (NRT), 100–102 (VKA), and Asn-128. Substrate is bound by residues Asn-128 and 154–156 (SGG). The active-site Proton acceptor is Lys-208. 211-212 (HN) is a substrate binding site. Residue Glu-215 is the Proton donor of the active site. Residues Tyr-216, Lys-286, Arg-313, Arg-474, and His-480 each coordinate substrate.

The protein belongs to the 6-phosphogluconate dehydrogenase family. In terms of assembly, homodimer.

It catalyses the reaction 6-phospho-D-gluconate + NADP(+) = D-ribulose 5-phosphate + CO2 + NADPH. Its pathway is carbohydrate degradation; pentose phosphate pathway; D-ribulose 5-phosphate from D-glucose 6-phosphate (oxidative stage): step 3/3. Functionally, catalyzes the oxidative decarboxylation of 6-phosphogluconate to ribulose 5-phosphate and CO(2), with concomitant reduction of NADP to NADPH. The polypeptide is 6-phosphogluconate dehydrogenase, decarboxylating (DOR14) (Candida albicans (Yeast)).